The following is a 220-amino-acid chain: Ribosomal RNA small subunit methyltransferase G (220 aa).

S-adenosyl-L-methionine-binding positions include glycine 82, leucine 87, aspartate 105–threonine 107, valine 133–glutamate 134, and arginine 147.

This sequence belongs to the methyltransferase superfamily. RNA methyltransferase RsmG family.

It localises to the cytoplasm. Functionally, specifically methylates the N7 position of a guanine in 16S rRNA. This Chlorobium limicola (strain DSM 245 / NBRC 103803 / 6330) protein is Ribosomal RNA small subunit methyltransferase G.